The primary structure comprises 299 residues: Kruppel-like factor 2 (299 aa).

2 disordered regions span residues 19–38 (YQNA…SHHH) and 146–189 (YSFS…RRDK). Basic residues predominate over residues 23 to 38 (HHQHHQQHYHQQSHHH). Residues 153-180 (SGKDEEDPRIPLKDRGRVYHPQSTEKPK) show a composition bias toward basic and acidic residues. 3 C2H2-type zinc fingers span residues 198 to 222 (HKCF…ERVH), 228 to 252 (YPCE…YRKH), and 258 to 280 (FACK…MKRH).

This sequence belongs to the krueppel C2H2-type zinc-finger protein family. Expressed predominantly in intestine.

Its subcellular location is the nucleus. Probable transcription factor which regulates lipid metabolism. The sequence is that of Kruppel-like factor 2 from Caenorhabditis elegans.